Here is a 256-residue protein sequence, read N- to C-terminus: Thiazole synthase (256 aa).

The active-site Schiff-base intermediate with DXP is the Lys96. 1-deoxy-D-xylulose 5-phosphate is bound by residues Gly157, 184-185 (AG), and 206-207 (NT).

The protein belongs to the ThiG family. As to quaternary structure, homotetramer. Forms heterodimers with either ThiH or ThiS.

Its subcellular location is the cytoplasm. The enzyme catalyses [ThiS sulfur-carrier protein]-C-terminal-Gly-aminoethanethioate + 2-iminoacetate + 1-deoxy-D-xylulose 5-phosphate = [ThiS sulfur-carrier protein]-C-terminal Gly-Gly + 2-[(2R,5Z)-2-carboxy-4-methylthiazol-5(2H)-ylidene]ethyl phosphate + 2 H2O + H(+). Its pathway is cofactor biosynthesis; thiamine diphosphate biosynthesis. Its function is as follows. Catalyzes the rearrangement of 1-deoxy-D-xylulose 5-phosphate (DXP) to produce the thiazole phosphate moiety of thiamine. Sulfur is provided by the thiocarboxylate moiety of the carrier protein ThiS. In vitro, sulfur can be provided by H(2)S. This chain is Thiazole synthase, found in Brucella canis (strain ATCC 23365 / NCTC 10854 / RM-666).